The chain runs to 341 residues: MKDNYILAFETSCDETSVAILKNGSELLCNIIASQINSHKRFGGVVPEIASRHHVEQITVCIEAALEEAEISADQLTAVAVTEGPGLNGALLVGIMAAKTFAWANHLPLIPVNHMAGHLMAASLVDTIEYPAMALLVSGGHSELVYVEKEGSYKKVGETRDDAAGEAYDKVGRVMGLTYPSGKVIDELAHKGQDTYNFPRAMMNTHEVEFSFSGLKSAFINLVHNENQKGNDVIANDLENLAASFQVAVVDVLMAKTKLAMEKYPVKTLIIGGGVSANQGLRERLSAEITDEKLIIPPLRLCGDNAGMIAAAAYIEWKKGLENVQAGLDLNAKPSLVFEDM.

The Fe cation site is built by His-114 and His-118. Substrate-binding positions include 136-140 (LVSGG), Asp-169, Gly-182, Asp-186, and Asn-278. Asp-304 contacts Fe cation.

It belongs to the KAE1 / TsaD family. Fe(2+) is required as a cofactor.

The protein localises to the cytoplasm. The catalysed reaction is L-threonylcarbamoyladenylate + adenosine(37) in tRNA = N(6)-L-threonylcarbamoyladenosine(37) in tRNA + AMP + H(+). Required for the formation of a threonylcarbamoyl group on adenosine at position 37 (t(6)A37) in tRNAs that read codons beginning with adenine. Is involved in the transfer of the threonylcarbamoyl moiety of threonylcarbamoyl-AMP (TC-AMP) to the N6 group of A37, together with TsaE and TsaB. TsaD likely plays a direct catalytic role in this reaction. In Lactococcus lactis subsp. cremoris (strain MG1363), this protein is tRNA N6-adenosine threonylcarbamoyltransferase.